Here is a 482-residue protein sequence, read N- to C-terminus: Glutamate synthase [NADPH] small chain (482 aa).

The 4Fe-4S ferredoxin-type domain occupies 39-72 (ERANEQANRCSQCGVPFCQVHCPVSNNIPDWLKL). The [4Fe-4S] cluster site is built by Cys95, Cys99, Cys105, and Cys109.

As to quaternary structure, aggregate of 4 catalytic active heterodimers, consisting of a large and a small subunit. [4Fe-4S] cluster is required as a cofactor.

It carries out the reaction 2 L-glutamate + NADP(+) = L-glutamine + 2-oxoglutarate + NADPH + H(+). It functions in the pathway amino-acid biosynthesis; L-glutamate biosynthesis via GLT pathway; L-glutamate from 2-oxoglutarate and L-glutamine (NADP(+) route): step 1/1. Its pathway is energy metabolism; nitrogen metabolism. The chain is Glutamate synthase [NADPH] small chain (gltD) from Azospirillum brasilense.